A 330-amino-acid polypeptide reads, in one-letter code: GTPase Obg (330 aa).

The Obg domain maps to 1-159 (MHFIDEVKIY…MWIHLRLKLL (159 aa)). In terms of domain architecture, OBG-type G spans 160 to 327 (SDVGLVGLPN…IVKLALEIIK (168 aa)). GTP contacts are provided by residues 166 to 173 (GLPNAGKS), 191 to 195 (FTTLV), 212 to 215 (DIPG), 279 to 282 (NKCD), and 308 to 310 (STY). Ser-173 and Thr-193 together coordinate Mg(2+).

This sequence belongs to the TRAFAC class OBG-HflX-like GTPase superfamily. OBG GTPase family. In terms of assembly, monomer. Mg(2+) serves as cofactor.

It is found in the cytoplasm. In terms of biological role, an essential GTPase which binds GTP, GDP and possibly (p)ppGpp with moderate affinity, with high nucleotide exchange rates and a fairly low GTP hydrolysis rate. Plays a role in control of the cell cycle, stress response, ribosome biogenesis and in those bacteria that undergo differentiation, in morphogenesis control. In Rickettsia typhi (strain ATCC VR-144 / Wilmington), this protein is GTPase Obg.